The primary structure comprises 488 residues: Ribulose bisphosphate carboxylase large chain 1 (488 aa).

Positions 127 and 177 each coordinate substrate. Catalysis depends on K179, which acts as the Proton acceptor. K181 provides a ligand contact to substrate. Mg(2+) is bound by residues K205, D207, and E208. At K205 the chain carries N6-carboxylysine. Catalysis depends on H297, which acts as the Proton acceptor. Positions 298, 330, and 382 each coordinate substrate.

It belongs to the RuBisCO large chain family. Type I subfamily. Heterohexadecamer of 8 large chains and 8 small chains. It depends on Mg(2+) as a cofactor.

It carries out the reaction 2 (2R)-3-phosphoglycerate + 2 H(+) = D-ribulose 1,5-bisphosphate + CO2 + H2O. The catalysed reaction is D-ribulose 1,5-bisphosphate + O2 = 2-phosphoglycolate + (2R)-3-phosphoglycerate + 2 H(+). In terms of biological role, ruBisCO catalyzes two reactions: the carboxylation of D-ribulose 1,5-bisphosphate, the primary event in carbon dioxide fixation, as well as the oxidative fragmentation of the pentose substrate. Both reactions occur simultaneously and in competition at the same active site. This is Ribulose bisphosphate carboxylase large chain 1 from Bradyrhizobium sp. (strain BTAi1 / ATCC BAA-1182).